The chain runs to 793 residues: Tripartite terminase subunit 1 (793 aa).

Residues 206–234 (CSVCFEELCVTANSGDSTHKRIVRKICDH) form a C3H1-type zinc finger. Residue 697–704 (FSSVFKCG) participates in ATP binding.

It belongs to the herpesviridae TRM1 protein family. Associates with TRM2 and TRM3 to form the tripartite terminase complex. Interacts with portal protein.

The protein localises to the host nucleus. Functionally, component of the molecular motor that translocates viral genomic DNA in empty capsid during DNA packaging. Forms a tripartite terminase complex together with TRM2 and TRM3 in the host cytoplasm. Once the complex reaches the host nucleus, it interacts with the capsid portal vertex. This portal forms a ring in which genomic DNA is translocated into the capsid. TRM1 carries an endonuclease activity that plays an important role for the cleavage of concatemeric viral DNA into unit length genomes. In Gallid herpesvirus 2 (strain Chicken/Md5/ATCC VR-987) (GaHV-2), this protein is Tripartite terminase subunit 1.